The following is a 640-amino-acid chain: Zinc finger and BTB domain-containing protein 22 (640 aa).

The 65-residue stretch at 57-121 (CDVSIRVQGR…AYTGRLSMAA (65 aa)) folds into the BTB domain. Disordered stretches follow at residues 191 to 244 (RSHA…PVFP), 308 to 327 (PAPAPLVPQDPDLEEDEEED), and 332 to 482 (CEDD…GGTG). Over residues 192–210 (SHASSRASENQSPSSSNYF) the composition is skewed to polar residues. Phosphoserine is present on S203. The span at 318–327 (PDLEEDEEED) shows a compositional bias: acidic residues. Low complexity predominate over residues 431–442 (SSSSSSSSSSSS). Positions 469-482 (GMPGGPGGTPGGTG) are enriched in gly residues. The segment at 490 to 511 (FLCHCGKAFSHKSMRDRHVNMH) adopts a C2H2-type 1; atypical zinc-finger fold. 2 consecutive C2H2-type zinc fingers follow at residues 517–539 (FDCPVCNKKFKMKHHLTEHMKTH) and 545–571 (YECGVCAKKFMWRDSFMRHRGHCERRH). The tract at residues 571–640 (HRLVGGGGGG…MGFGGGGGTN (70 aa)) is disordered. Gly residues predominate over residues 574 to 588 (VGGGGGGGPGPGGPT).

Belongs to the krueppel C2H2-type zinc-finger protein family.

The protein resides in the nucleus. May be involved in transcriptional regulation. The chain is Zinc finger and BTB domain-containing protein 22 (ZBTB22) from Canis lupus familiaris (Dog).